The primary structure comprises 334 residues: Probable 3-hydroxyisobutyrate dehydrogenase-like 1, mitochondrial (334 aa).

The N-terminal 23 residues, Met1–Met23, are a transit peptide targeting the mitochondrion. Ala24 is modified (N-acetylalanine). NAD(+) contacts are provided by residues Thr38 to Asn67 and Thr133. Lys207 is a catalytic residue. An NAD(+)-binding site is contributed by Lys275.

This sequence belongs to the HIBADH-related family. 3-hydroxyisobutyrate dehydrogenase subfamily.

Its subcellular location is the mitochondrion. It carries out the reaction 3-hydroxy-2-methylpropanoate + NAD(+) = 2-methyl-3-oxopropanoate + NADH + H(+). It functions in the pathway amino-acid degradation; L-valine degradation. The protein is Probable 3-hydroxyisobutyrate dehydrogenase-like 1, mitochondrial of Arabidopsis thaliana (Mouse-ear cress).